A 251-amino-acid chain; its full sequence is MNFLDLPEECIATMISFTSPFDACRISAVSKLLRSAADSNTTWERFLPSDYRMYIDNSLSRFSNKQLFLRFCESPLLIEDGRTSFWMEKRSGKKCWMLSARKLDIVWVDSPEFWIWVSIPDSRFEEVAGLLMVCWFEIRGKISTSLLSKATNYSAYLVFKEQEMGSFGFESLPLEVSFRSTRTEVYNNRRVFLKSGTQESREDGWLEIELGEYYVGFDDEEIEMSVLETREGGWKGGIIVQGIEIRPKELL.

In terms of domain architecture, F-box spans 1 to 46; the sequence is MNFLDLPEECIATMISFTSPFDACRISAVSKLLRSAADSNTTWERF.

This chain is Putative F-box protein PP2-B12 (PP2B12), found in Arabidopsis thaliana (Mouse-ear cress).